The chain runs to 218 residues: Octanoyltransferase (218 aa).

Residues 27 to 210 (AGAEETLYLL…QFRAIFADST (184 aa)) enclose the BPL/LPL catalytic domain. Residues 72–79 (RGGNITCH), 139–141 (SIG), and 152–154 (GFA) contribute to the substrate site. Cys170 acts as the Acyl-thioester intermediate in catalysis.

Belongs to the LipB family.

It localises to the cytoplasm. The catalysed reaction is octanoyl-[ACP] + L-lysyl-[protein] = N(6)-octanoyl-L-lysyl-[protein] + holo-[ACP] + H(+). Its pathway is protein modification; protein lipoylation via endogenous pathway; protein N(6)-(lipoyl)lysine from octanoyl-[acyl-carrier-protein]: step 1/2. Functionally, catalyzes the transfer of endogenously produced octanoic acid from octanoyl-acyl-carrier-protein onto the lipoyl domains of lipoate-dependent enzymes. Lipoyl-ACP can also act as a substrate although octanoyl-ACP is likely to be the physiological substrate. The protein is Octanoyltransferase of Nitratidesulfovibrio vulgaris (strain DSM 19637 / Miyazaki F) (Desulfovibrio vulgaris).